Here is a 784-residue protein sequence, read N- to C-terminus: LPS-assembly protein LptD (784 aa).

The N-terminal stretch at 1 to 24 (MKKRIPTLLATMIATALYSQQGLA) is a signal peptide. Cystine bridges form between Cys-31–Cys-724 and Cys-173–Cys-725.

This sequence belongs to the LptD family. In terms of assembly, component of the lipopolysaccharide transport and assembly complex. Interacts with LptE and LptA. In terms of processing, contains two intramolecular disulfide bonds.

The protein resides in the cell outer membrane. Its function is as follows. Together with LptE, is involved in the assembly of lipopolysaccharide (LPS) at the surface of the outer membrane. The chain is LPS-assembly protein LptD from Shigella dysenteriae serotype 1 (strain Sd197).